The sequence spans 299 residues: DNA-binding transcriptional repressor CapW (299 aa).

A compositionally biased stretch (basic and acidic residues) spans 1–15 (MPDNFREGDKQDSQK). Residues 1 to 21 (MPDNFREGDKQDSQKGRQGAR) form a disordered region. Residues 1 to 95 (MPDNFREGDK…LFQPVYMTSS (95 aa)) are winged HTH domain. Residues 96 to 207 (LECYLNDLLQ…LSRIVQAQNA (112 aa)) form a WYL domain region. The WYL domain maps to 131-211 (LRRLDTDVVS…VQAQNAGPDE (81 aa)). Residues 156-200 (YQSMSDPQGSKRTLTPHSLVHDGYRWHTRAWCHKRGEYRDFLLSR) are probable ligand-binding region. Residues 208–299 (GPDEERANGD…KDEIYALLKQ (92 aa)) are WCX domain.

In terms of assembly, homodimer.

Functionally, transcriptional regulator of a CBASS antivirus system. CBASS (cyclic oligonucleotide-based antiphage signaling system) provides immunity against bacteriophage. The CD-NTase protein synthesizes cyclic nucleotides in response to infection; these serve as specific second messenger signals. The signals activate a diverse range of effectors, leading to bacterial cell death and thus abortive phage infection. A type III CBASS system. Expression of this CBASS system (Cap18-Cap6-Cap7-CdnC-CapW-Cap17) in a susceptible E.coli (strain MG1655) confers resistance to bacteriophage P1. Binds specifically to and represses expression from the CBASS promoter, found between the genes for divergently transcribed capW and cdnC. This Escherichia coli (strain KTE188) protein is DNA-binding transcriptional repressor CapW.